The following is a 359-amino-acid chain: NAC transcription factor 47 (359 aa).

An NAC domain is found at 10–186 (LPPGFRFHPT…DWVLCRIYKK (177 aa)). A DNA-binding region spans residues 112–192 (IGIKKALVFY…IYKKSHASLS (81 aa)). Disordered regions lie at residues 147 to 166 (KRINSSRSGGSEVNNNFGDR) and 200 to 226 (TSNQEHEENDNEPFVDRGTFLPNLQND). Residues 148-165 (RINSSRSGGSEVNNNFGD) show a composition bias toward polar residues.

Its subcellular location is the nucleus. Transcription factor that binds to the promoter of ACO5, an ACC oxidase involved in ethylene biosynthesis. Mediates waterlogging-induced hyponastic leaf movement, and cell expansion in abaxial cells of the basal petiole region, by directly regulating the expression of ACO5. Required for normal seed development and morphology. The protein is NAC transcription factor 47 of Arabidopsis thaliana (Mouse-ear cress).